The sequence spans 616 residues: MPKLRSATSTQGRNMAGARALWRATGVKDSDFGKPIIAISNSFTQFVPGHVHLKDMGSLVAGAIEEAGGIAKEFNTIAVDDGIAMGHGGMLYSLPSRELIADSVEYMVNAHCADALVCISNCDKITPGMMMAALRLNIPVIFVSGGPMEAGKTKLSGDIIKLDLVDAMVAGADERVSDEDSEKIERSACPTCGSCSGMFTANSMNCLTEALGLSLPGNGSMLATHADRRELFLEAGRRIMDLATRYYKHDDESALPRNIANFNAFENAMTLDIAMGGSSNTVLHLLAGAQEAKVDFTMDDIDRLSRKVPHLCKVAPSTPKYHMEDVHRAGGVMGILGELDRAGLIHNDAYHVAGKNLKEVLAKWDIAQSQDEAVRKFFSAGPAGIPTTKAFSQDCRWDSVDDDREGGCIRKREFAFSQEGGLAVLSGNIALDGCIVKTAGVEEENHTFIGSARVYESQDDAVAGILGGEVVAGDVVVIRYEGPKGGPGMQEMLYPTSYLKSRGLGKACALITDGRFSGGTSGLSIGHVSPEAAAGGTIGLVETGDRIEIDIPARSIKLAISDVELAARRSAMESRGKQAWKPVDRIREVSLALKAYALLATSADKGAVRDVSKLED.

D81 is a Mg(2+) binding site. C122 is a binding site for [2Fe-2S] cluster. Mg(2+) is bound by residues D123 and K124. K124 bears the N6-carboxylysine mark. C195 serves as a coordination point for [2Fe-2S] cluster. A Mg(2+)-binding site is contributed by E491. S517 (proton acceptor) is an active-site residue.

Belongs to the IlvD/Edd family. Homodimer. [2Fe-2S] cluster is required as a cofactor. It depends on Mg(2+) as a cofactor.

It catalyses the reaction (2R)-2,3-dihydroxy-3-methylbutanoate = 3-methyl-2-oxobutanoate + H2O. The catalysed reaction is (2R,3R)-2,3-dihydroxy-3-methylpentanoate = (S)-3-methyl-2-oxopentanoate + H2O. The protein operates within amino-acid biosynthesis; L-isoleucine biosynthesis; L-isoleucine from 2-oxobutanoate: step 3/4. Its pathway is amino-acid biosynthesis; L-valine biosynthesis; L-valine from pyruvate: step 3/4. Functions in the biosynthesis of branched-chain amino acids. Catalyzes the dehydration of (2R,3R)-2,3-dihydroxy-3-methylpentanoate (2,3-dihydroxy-3-methylvalerate) into 2-oxo-3-methylpentanoate (2-oxo-3-methylvalerate) and of (2R)-2,3-dihydroxy-3-methylbutanoate (2,3-dihydroxyisovalerate) into 2-oxo-3-methylbutanoate (2-oxoisovalerate), the penultimate precursor to L-isoleucine and L-valine, respectively. The protein is Dihydroxy-acid dehydratase of Shewanella woodyi (strain ATCC 51908 / MS32).